Reading from the N-terminus, the 653-residue chain is tRNA 5-methylaminomethyl-2-thiouridine biosynthesis bifunctional protein MnmC (653 aa).

Residues 1 to 236 (MPDRLVPATL…KFAMLVGEYA (236 aa)) form a tRNA (mnm(5)s(2)U34)-methyltransferase region. The tract at residues 260-653 (IGAGLAGCAL…IRALRGRKLG (394 aa)) is FAD-dependent cmnm(5)s(2)U34 oxidoreductase.

The protein in the N-terminal section; belongs to the methyltransferase superfamily. tRNA (mnm(5)s(2)U34)-methyltransferase family. This sequence in the C-terminal section; belongs to the DAO family. It depends on FAD as a cofactor.

It localises to the cytoplasm. It catalyses the reaction 5-aminomethyl-2-thiouridine(34) in tRNA + S-adenosyl-L-methionine = 5-methylaminomethyl-2-thiouridine(34) in tRNA + S-adenosyl-L-homocysteine + H(+). Its function is as follows. Catalyzes the last two steps in the biosynthesis of 5-methylaminomethyl-2-thiouridine (mnm(5)s(2)U) at the wobble position (U34) in tRNA. Catalyzes the FAD-dependent demodification of cmnm(5)s(2)U34 to nm(5)s(2)U34, followed by the transfer of a methyl group from S-adenosyl-L-methionine to nm(5)s(2)U34, to form mnm(5)s(2)U34. This is tRNA 5-methylaminomethyl-2-thiouridine biosynthesis bifunctional protein MnmC from Burkholderia vietnamiensis (strain G4 / LMG 22486) (Burkholderia cepacia (strain R1808)).